The chain runs to 61 residues: Temporin-SN3 (61 aa).

A signal peptide spans 1 to 22; sequence MFTLKKTLLLLFFLGTINLSLC. The propeptide at 23 to 44 is removed in mature form; sequence EEERNAEEERRDGDDEMDVEVK. K61 is modified (lysine amide).

This sequence belongs to the frog skin active peptide (FSAP) family. Temporin subfamily. As to expression, expressed by the skin glands.

The protein localises to the secreted. Functionally, antimicrobial peptide. Active against some Gram-positive and Gram-negative bacterial strains. Active against fungus C.glabrata 090902 but not against C.albicans ATCC 12231. Shows weak hemolytic activity against human erythrocytes. The sequence is that of Temporin-SN3 from Sylvirana spinulosa (Fine-spined frog).